Consider the following 425-residue polypeptide: MNKMPAGEQECEYNKEGKYYSKGVKLVRKKKKIPGYRWGDIKINIIGEKDDLPIHFCDKCDLPIKIYGRIIPCKHAFCYHCANLYDKVGYKVCPRCRYPVLRIEAHKRGSVFMCSIVQQCKRTYLSQKSLQAHIKRRHKRARKQVTSASLEKVRPHIAPPQTEISDIPKRLQDRDHLSYIPPEQHTMVSLPSVQHMLQEQHNQPHKDIQAPPPELSLSLPFPIQWETVSIFTRKHGNLTVDHIQNNSDSGAKKPTPPDYYPECQSQPAVSSPHHIIPQKQHYAPPPSPSSPVNHQMPYPPQDVVTPNSVRSQVPALTTTYDPSSGYIIVKVPPDMNSPPLRAPQSQNGNPSASEFASHHYNLNILPQFTENQETLSPQFTQTDAMDHRRWPAWKRLSPCPPTRSPPPSTLHGRSHHSHQRRHRRY.

Residues 57–97 (CDKCDLPIKIYGRIIPCKHAFCYHCANLYDKVGYKVCPRCR) form an RING-type zinc finger. The HYB domain stretch occupies residues 96-154 (CRYPVLRIEAHKRGSVFMCSIVQQCKRTYLSQKSLQAHIKRRHKRARKQVTSASLEKVR). The C2H2-type zinc-finger motif lies at 112–138 (FMCSIVQQCKRTYLSQKSLQAHIKRRH). Disordered stretches follow at residues 241–297 (DHIQ…HQMP) and 382–425 (TDAM…HRRY). Residues 398-408 (PCPPTRSPPPS) are compositionally biased toward pro residues. Residues 412–425 (GRSHHSHQRRHRRY) are compositionally biased toward basic residues.

As to quaternary structure, homodimer. In terms of tissue distribution, exclusively expressed in testis and sperm, including spermatocytes, round and elongated spermatids, and Leydig cells.

Its subcellular location is the cytoplasm. The catalysed reaction is S-ubiquitinyl-[E2 ubiquitin-conjugating enzyme]-L-cysteine + [acceptor protein]-L-lysine = [E2 ubiquitin-conjugating enzyme]-L-cysteine + N(6)-ubiquitinyl-[acceptor protein]-L-lysine.. It functions in the pathway protein modification; protein ubiquitination. Its function is as follows. E3 ubiquitin ligase catalyzing the covalent attachment of ubiquitin moieties onto substrate proteins. May operate on tyrosine-phosphorylated SRC substrates. The chain is E3 ubiquitin-protein ligase CBLL2 from Homo sapiens (Human).